Consider the following 255-residue polypeptide: 5-oxoprolinase subunit A (255 aa).

This sequence belongs to the LamB/PxpA family. As to quaternary structure, forms a complex composed of PxpA, PxpB and PxpC.

The enzyme catalyses 5-oxo-L-proline + ATP + 2 H2O = L-glutamate + ADP + phosphate + H(+). Functionally, catalyzes the cleavage of 5-oxoproline to form L-glutamate coupled to the hydrolysis of ATP to ADP and inorganic phosphate. This is 5-oxoprolinase subunit A from Rhodopseudomonas palustris (strain BisB18).